The following is a 167-amino-acid chain: Zymogen granule membrane protein 16 (167 aa).

An N-terminal signal peptide occupies residues 1 to 16 (MLTVALLALLCASASG). One can recognise a Jacalin-type lectin domain in the interval 24-159 (SSYSGEYGGG…IDAIGLHWDV (136 aa)).

Belongs to the jacalin lectin family. In terms of tissue distribution, highly expressed in liver. Detected at lower levels in colon, ileum and jejunum.

The protein resides in the secreted. Its subcellular location is the extracellular space. It is found in the extracellular matrix. The protein localises to the zymogen granule lumen. It localises to the golgi apparatus lumen. In terms of biological role, may play a role in protein trafficking. May act as a linker molecule between the submembranous matrix on the luminal side of zymogen granule membrane (ZGM) and aggregated secretory proteins during granule formation in the TGN. In Homo sapiens (Human), this protein is Zymogen granule membrane protein 16 (ZG16).